Consider the following 635-residue polypeptide: ATP-binding protein Uup (635 aa).

ABC transporter domains follow at residues 1–253 (MSLI…RVEE) and 320–546 (FEME…KTEE). ATP is bound by residues 36-43 (GRNGAGKS) and 352-359 (GPNGCGKT). A C-terminal domain (CTD), binds DNA, required to complement a deletion mutant region spans residues 551-635 (KAETVKRSSS…EYLEALKNGG (85 aa)). The stretch at 563-631 (SYKLQRELEQ…FERWEYLEAL (69 aa)) forms a coiled coil.

This sequence belongs to the ABC transporter superfamily. ABCF family. Uup subfamily.

It localises to the cytoplasm. The enzyme catalyses ATP + H2O = ADP + phosphate + H(+). With respect to regulation, ATPase activity inhibited by N-ethylmaleimide but not by vanadate. Probably plays a role in ribosome assembly or function; overexpression suppresses cold-sensitive growth of a bipA deletion. May be involved in resolution of branched DNA intermediates that result from template switching in postreplication gaps. Binds DNA at Holliday junctions. May be involved in the correct segregation of nucleoids. Has ATPase activity, binds DNA non-sequence specifically; the presence of DNA does not change the ATPase activity. Mutations in this gene cause an increase in RecA-independent precise excision of transposons and insertion elements, and also reduce bacteriophage Mu growth. Genetic interactions among priB, dam, lexA, nagC, polA, rdgB, rdgB, rep and uup link the PriA-PriB replication restart pathway to DNA double-strand break repair. The sequence is that of ATP-binding protein Uup from Escherichia coli (strain K12).